Here is a 514-residue protein sequence, read N- to C-terminus: Efflux pump aflT (514 aa).

A run of 10 helical transmembrane segments spans residues 13–33, 61–81, 85–105, 116–136, 146–166, 174–194, 218–238, 247–267, 289–309, and 321–341; these read ISGMKLYLIVLSLLLAVFCVA, SAYLLTTCAFQLLYGKLYALF, WVFLVALCIFEVGSLICGVAP, IAGVGSSGIFTGALVTIAHIV, GLLGGMYGIASVAGPLLGGAF, WCFYINLPVGGVTAVVILFLL, GTIVFTPSIICVLLALQWGGV, IIALFVLFGVLLITFIIIQVL, VFVFFIGASMFVMIYYVPIWF, and GIDSIALILANTAGAIISGAV. A glycan (N-linked (GlcNAc...) asparagine) is linked at N343. A run of 4 helical transmembrane segments spans residues 351–371, 378–398, 411–431, and 485–505; these read WFIVSSVIMSIGAGCLTLFTV, WIGFLFLYGIGVGFGFQQGAV, IGTALIWFVQMLGGALFTSVA, and LDVFQVALICSCLSILGAVGI.

It belongs to the major facilitator superfamily. TCR/Tet family.

It localises to the cell membrane. Its function is as follows. Efflux pump; part of the gene cluster that mediates the biosynthesis of aflatoxins. This Aspergillus parasiticus (strain ATCC 56775 / NRRL 5862 / SRRC 143 / SU-1) protein is Efflux pump aflT.